The following is an 87-amino-acid chain: Small ribosomal subunit protein uS15 (87 aa).

This sequence belongs to the universal ribosomal protein uS15 family. Part of the 30S ribosomal subunit. Forms a bridge to the 50S subunit in the 70S ribosome, contacting the 23S rRNA.

Its function is as follows. One of the primary rRNA binding proteins, it binds directly to 16S rRNA where it helps nucleate assembly of the platform of the 30S subunit by binding and bridging several RNA helices of the 16S rRNA. In terms of biological role, forms an intersubunit bridge (bridge B4) with the 23S rRNA of the 50S subunit in the ribosome. The protein is Small ribosomal subunit protein uS15 of Alkaliphilus oremlandii (strain OhILAs) (Clostridium oremlandii (strain OhILAs)).